The primary structure comprises 219 residues: Probable GTP-binding protein EngB (219 aa).

An EngB-type G domain is found at 24-207; that stretch reads VQPEIAFAGR…HELIESWLRP (184 aa). GTP-binding positions include 32-39, 59-63, 81-84, 148-151, and 186-188; these read GRSNAGKS, GRTQH, DLPG, TKCD, and FSA. 2 residues coordinate Mg(2+): Ser39 and Thr61.

Belongs to the TRAFAC class TrmE-Era-EngA-EngB-Septin-like GTPase superfamily. EngB GTPase family. Mg(2+) serves as cofactor.

Its function is as follows. Necessary for normal cell division and for the maintenance of normal septation. This is Probable GTP-binding protein EngB from Burkholderia vietnamiensis (strain G4 / LMG 22486) (Burkholderia cepacia (strain R1808)).